The chain runs to 101 residues: MDKSKRSFLKSKRSVRRRLPPIQSGDLIDYRNMSLISRFISEQGKILSRRVNRLTLKQQRLITVAIKQARILSLLPFLNNEKQFERTESTARTTGLRTRNK.

Belongs to the bacterial ribosomal protein bS18 family. Part of the 30S ribosomal subunit.

The protein resides in the plastid. Its subcellular location is the chloroplast. The protein is Small ribosomal subunit protein bS18c of Coffea arabica (Arabian coffee).